The primary structure comprises 477 residues: Myosin-binding protein H (477 aa).

Positions M1–A73 are disordered. T6 and T26 each carry phosphothreonine. In terms of domain architecture, Fibronectin type-III 1 spans A73–N168. Residues P172–D260 form the Ig-like C2-type 1 domain. In terms of domain architecture, Fibronectin type-III 2 spans P269–A364. One can recognise an Ig-like C2-type 2 domain in the interval P382 to D466.

The protein belongs to the immunoglobulin superfamily. MyBP family. In terms of tissue distribution, mainly expressed in the skeletal muscle. Slightly expressed in the left atrium and arteria mammaria interna.

In terms of biological role, binds to myosin; probably involved in interaction with thick myofilaments in the A-band. The protein is Myosin-binding protein H (MYBPH) of Homo sapiens (Human).